The sequence spans 134 residues: Large ribosomal subunit protein bL17 (134 aa).

The protein belongs to the bacterial ribosomal protein bL17 family. In terms of assembly, part of the 50S ribosomal subunit. Contacts protein L32.

This is Large ribosomal subunit protein bL17 from Anaplasma marginale (strain Florida).